An 80-amino-acid chain; its full sequence is Small ribosomal subunit protein bS18 (80 aa).

This sequence belongs to the bacterial ribosomal protein bS18 family. In terms of assembly, part of the 30S ribosomal subunit. Forms a tight heterodimer with protein bS6.

In terms of biological role, binds as a heterodimer with protein bS6 to the central domain of the 16S rRNA, where it helps stabilize the platform of the 30S subunit. This is Small ribosomal subunit protein bS18 from Clostridium perfringens (strain ATCC 13124 / DSM 756 / JCM 1290 / NCIMB 6125 / NCTC 8237 / Type A).